The following is a 132-amino-acid chain: uncharacterized protein (132 aa).

This sequence belongs to the mycobacterial PPE family.

This is an uncharacterized protein from Mycobacterium tuberculosis (strain ATCC 25618 / H37Rv).